The primary structure comprises 594 residues: Shugoshin (594 aa).

The stretch at 38–61 (KITDMETKVSELVQENVSLRSRLS) forms a coiled coil. 4 disordered regions span residues 104 to 178 (SGIH…KSSR), 201 to 266 (QLPI…TNKN), 342 to 380 (SKIK…RRTR), and 519 to 549 (TKQQ…RTKQ). Positions 220-240 (EEESQENKHTKEEREDEGKEN) form a coiled coil. Over residues 224 to 239 (QENKHTKEEREDEGKE) the composition is skewed to basic and acidic residues. The segment covering 252-261 (SVTNTGTECS) has biased composition (polar residues). A compositionally biased stretch (basic residues) spans 343–355 (KIKHSMKHPRTKL). Over residues 357–376 (GGQDDIMPHTDYDKDDEKRE) the composition is skewed to basic and acidic residues. 2 stretches are compositionally biased toward polar residues: residues 519 to 532 (TKQQ…SDPN) and 539 to 549 (NSNVKPTRTKQ).

It belongs to the shugoshin family.

It is found in the nucleus. Its subcellular location is the chromosome. The protein localises to the centromere. Plays a central role in chromosome cohesion during cell division by preventing premature dissociation of cohesin complex from centromeres after prophase, when most of cohesin complex dissociates from chromosomes arms. The protein is Shugoshin (SGO1) of Kluyveromyces lactis (strain ATCC 8585 / CBS 2359 / DSM 70799 / NBRC 1267 / NRRL Y-1140 / WM37) (Yeast).